The sequence spans 301 residues: Tetrahydromethanopterin S-methyltransferase subunit E (301 aa).

A run of 5 helical transmembrane segments spans residues 85–105 (VIFAIAIGALVASAVHGTYCI), 130–150 (HTPVMMGYAFITTFCILVVSY), 151–171 (IMVAVLAHPFPLTLLAFIWGI), 232–252 (PVTGLAFGMTVFLSGWVTAVF), and 258–278 (LTMGWLSVAAGVILVLLLIIW).

This sequence belongs to the MtrE family. In terms of assembly, the complex is composed of 8 subunits; MtrA, MtrB, MtrC, MtrD, MtrE, MtrF, MtrG and MtrH.

The protein localises to the cell membrane. The catalysed reaction is 5-methyl-5,6,7,8-tetrahydromethanopterin + coenzyme M + 2 Na(+)(in) = 5,6,7,8-tetrahydromethanopterin + methyl-coenzyme M + 2 Na(+)(out). In terms of biological role, part of a complex that catalyzes the formation of methyl-coenzyme M and tetrahydromethanopterin from coenzyme M and methyl-tetrahydromethanopterin. This is an energy-conserving, sodium-ion translocating step. This is Tetrahydromethanopterin S-methyltransferase subunit E from Methanococcoides burtonii (strain DSM 6242 / NBRC 107633 / OCM 468 / ACE-M).